Reading from the N-terminus, the 572-residue chain is Neuronal acetylcholine receptor subunit alpha-9-I (572 aa).

The N-terminal stretch at 1 to 19 (MKTVVLLTWISCWIDVCTS) is a signal peptide. The Extracellular segment spans residues 20 to 232 (AQGRYAQKLL…YTLHLKRRSL (213 aa)). Residue Asn51 is glycosylated (N-linked (GlcNAc...) asparagine). Cys149 and Cys163 are disulfide-bonded. Residue Asn164 is glycosylated (N-linked (GlcNAc...) asparagine). A disulfide bond links Cys213 and Cys214. Helical transmembrane passes span 233–253 (FYIF…PLGF), 263–283 (VSLG…VAES), and 297–317 (YIAT…IMNI). At 318–550 (HFCGAEAKPV…WKKVAKVMDR (233 aa)) the chain is on the cytoplasmic side. The disordered stretch occupies residues 405–458 (GHLQNHHSTHQNHLDNCRYANGGHRDDHYSNRSNQNHHSNRSQTSKGEGGEEKR). Over residues 435–447 (NRSNQNHHSNRSQ) the composition is skewed to low complexity. Residues 551-571 (FFMWIFFIMVFLMSILIIGKA) form a helical membrane-spanning segment.

It belongs to the ligand-gated ion channel (TC 1.A.9) family. Acetylcholine receptor (TC 1.A.9.1) subfamily. As to expression, expressed in the liver, olfactory mucosa, pituitary gland, hair cells of the saccule and spleen.

It is found in the postsynaptic cell membrane. The protein localises to the cell membrane. This chain is Neuronal acetylcholine receptor subunit alpha-9-I (nachra9), found in Oncorhynchus mykiss (Rainbow trout).